The primary structure comprises 158 residues: Low molecular weight phosphotyrosine protein phosphatase (158 aa).

N-acetylalanine is present on alanine 2. Cysteine 13 (nucleophile) is an active-site residue. Residue arginine 19 is part of the active site. Residue aspartate 130 is the Proton donor of the active site. Phosphotyrosine is present on residues tyrosine 132 and tyrosine 133.

This sequence belongs to the low molecular weight phosphotyrosine protein phosphatase family. In terms of assembly, interacts with EPHA2; dephosphorylates EPHA2. Interacts with EPHB1. Interacts with the SH3 domain of SPTAN1. There is no interaction observed for isoform 2. In terms of processing, phosphorylated by LCK. Phosphorylation at Tyr-132 increases its phosphatase activity.

It is found in the cytoplasm. It carries out the reaction O-phospho-L-tyrosyl-[protein] + H2O = L-tyrosyl-[protein] + phosphate. The enzyme catalyses a phosphate monoester + H2O = an alcohol + phosphate. With respect to regulation, inhibited by sulfhydryl reagents. Its function is as follows. Acts on tyrosine phosphorylated proteins, low-MW aryl phosphates and natural and synthetic acyl phosphates with differences in substrate specificity between isoform 1 and isoform 2. The sequence is that of Low molecular weight phosphotyrosine protein phosphatase from Rattus norvegicus (Rat).